The primary structure comprises 85 residues: Electron transfer flavoprotein regulatory factor 1 homolog (85 aa).

The protein belongs to the complex I LYR family. As to expression, highly expressed in the larval fat body.

The protein resides in the mitochondrion. Functionally, acts as a regulator of the electron transfer flavoprotein by promoting the removal of flavin from the ETF holoenzyme. May act with the ETF complex to coordinate lipid homeostasis in the fat body in response to stage-specific demands. The chain is Electron transfer flavoprotein regulatory factor 1 homolog from Drosophila melanogaster (Fruit fly).